A 1256-amino-acid polypeptide reads, in one-letter code: N-acetylglucosamine-1-phosphotransferase subunits alpha/beta (1256 aa).

A helical membrane pass occupies residues 22 to 42; that stretch reads VCFLGVVVTIVSAFQFGEVVL. Residues asparagine 83, asparagine 114, asparagine 148, asparagine 179, and asparagine 250 are each glycosylated (N-linked (GlcNAc...) asparagine). 4 disulfide bridges follow: cysteine 438–cysteine 461, cysteine 452–cysteine 468, cysteine 505–cysteine 528, and cysteine 519–cysteine 535. LNR repeat units lie at residues 438-473 and 505-545; these read CAEG…GNSG and CNQG…ELYK. The Ca(2+) site is built by aspartate 449, aspartate 464, aspartate 467, aspartate 516, aspartate 531, and aspartate 534. N-linked (GlcNAc...) asparagine glycans are attached at residues asparagine 614, asparagine 699, asparagine 729, asparagine 829, and asparagine 1009. The DMAP1-binding domain occupies 699-798; sequence NISLLPKDAQ…TFPAVSVKVN (100 aa). Positions 1005-1040 constitute an EF-hand domain; sequence VQPLNISQVFDEVDTDQSGVLSDREIRTLATRIHEL. Positions 1018, 1020, 1022, and 1029 each coordinate Ca(2+). Asparagine 1129 is a glycosylation site (N-linked (GlcNAc...) asparagine). A helical transmembrane segment spans residues 1215–1235; that stretch reads VLATLIMFTIFSFFAEQLIAL.

It belongs to the stealth family. As to quaternary structure, hexamer of two alpha, two beta and two gamma (GNPTG) subunits; disulfide-linked. The alpha and/or the beta subunits of the enzyme constitute the catalytic subunits. Interacts with LYSET; facilitates proper localization of GNPTAB. The alpha- and beta-subunits are generated by a proteolytic cleavage by MBTPS1 protease at the Lys-928-Asp-929 bond. Expressed in the heart, whole brain, placenta, lung, liver, skeletal muscle, kidney and pancreas.

It is found in the golgi apparatus membrane. It carries out the reaction N(4)-[alpha-D-mannosyl-(1-&gt;2)-alpha-D-mannosyl-(glycan)]-L-asparaginyl-[protein] + UDP-N-acetyl-alpha-D-glucosamine = N(4)-[6-(N-acetyl-alpha-D-glucosaminyl-1-phospho)-alpha-D-mannosyl-(1-&gt;2)-alpha-D-mannosyl-(glycan)]-L-asparaginyl-[protein] + UMP + H(+). Catalyzes the formation of mannose 6-phosphate (M6P) markers on high mannose type oligosaccharides in the Golgi apparatus. M6P residues are required to bind to the M6P receptors (MPR), which mediate the vesicular transport of lysosomal enzymes to the endosomal/prelysosomal compartment. In Homo sapiens (Human), this protein is N-acetylglucosamine-1-phosphotransferase subunits alpha/beta (GNPTAB).